A 389-amino-acid polypeptide reads, in one-letter code: (S)-8-oxocitronellyl enol synthase CYC1 (389 aa).

NADP(+)-binding positions include Thr-34–Ile-36, Arg-62–Arg-63, Asp-80–Val-81, Ala-104–Trp-105, and Gln-138. Residues Lys-142 and Tyr-174 contribute to the active site. The substrate site is built by Lys-142 and Tyr-174. NADP(+) is bound by residues Tyr-174, Val-201, and Ser-208–Met-210. Ser-350 is a binding site for substrate.

Belongs to the short-chain dehydrogenases/reductases (SDR) family. Highly divergent.

It carries out the reaction (S)-8-oxocitronellyl enol + NADP(+) = (6E)-8-oxogeranial + NADPH + H(+). It catalyses the reaction (S)-8-oxocitronellyl enol + NAD(+) = (6E)-8-oxogeranial + NADH + H(+). Iridoid synthase that catalyzes the first step in generation of the iridoid ring scaffold using the linear monoterpene (6E)-8-oxogeranial as substrate. Iridoids comprise a large family of distinctive bicyclic monoterpenes that possess a wide range of pharmacological activities, including anticancer, anti-inflammatory, antifungal and antibacterial activities. The sequence is that of (S)-8-oxocitronellyl enol synthase CYC1 from Camptotheca acuminata (Happy tree).